Reading from the N-terminus, the 401-residue chain is Collagen and calcium-binding EGF domain-containing protein 1 (401 aa).

The signal sequence occupies residues 1–22 (MIYPGRGASLSVAVALVLFSSG). In terms of domain architecture, EGF-like; calcium-binding spans 126–167 (DIDECANNNETVCSQMCVNTPGSYRCDCHSGFYLEDDGKTCT). Intrachain disulfides connect Cys-130-Cys-142, Cys-138-Cys-151, and Cys-153-Cys-166. Asn-134 carries N-linked (GlcNAc...) asparagine glycosylation. Disordered regions lie at residues 229–321 (TTNS…PGSF) and 344–401 (SRPL…DWPV). Collagen-like domains are found at residues 234-276 (LPGP…PIGP) and 286-319 (GRRGPVGPPGAPGRDGMKGERGFPGPSGPPGPPG). Over residues 235 to 244 (PGPPGPPGPA) the composition is skewed to pro residues. Residues 246 to 258 (TPGAKGSSGSPGQ) show a composition bias toward low complexity.

Belongs to the CCBE1 family. In terms of tissue distribution, not expressed in blood or lymphatic endothelial cells, correlating spatially and temporally with the migration routes of endothelial cells that bud from the PCV, migrate in association with somite boundaries and seed the horizontal myoseptum region from where lymphatic precursors later migrate.

It is found in the secreted. Functionally, required for lymphangioblast budding and angiogenic sprouting from venous endothelium during embryogenesis. Required for the formation of facial lymphatic structures. Necessary for lymphangiogenesis, but is probably not part of either the vegfc-vegfr3 signaling or sox18-prox1 transcriptional pathways. The chain is Collagen and calcium-binding EGF domain-containing protein 1 (ccbe1) from Danio rerio (Zebrafish).